The sequence spans 428 residues: Dihydroorotase (428 aa).

2 residues coordinate Zn(2+): His61 and His63. Substrate contacts are provided by residues His63 to Arg65 and Asn95. Zn(2+) is bound by residues Asp153, His180, and His233. Asn279 is a substrate binding site. Asp306 serves as a coordination point for Zn(2+). The active site involves Asp306. Residues His310 and Phe324–Gly325 contribute to the substrate site.

It belongs to the metallo-dependent hydrolases superfamily. DHOase family. Class I DHOase subfamily. It depends on Zn(2+) as a cofactor.

It carries out the reaction (S)-dihydroorotate + H2O = N-carbamoyl-L-aspartate + H(+). It participates in pyrimidine metabolism; UMP biosynthesis via de novo pathway; (S)-dihydroorotate from bicarbonate: step 3/3. Catalyzes the reversible cyclization of carbamoyl aspartate to dihydroorotate. The polypeptide is Dihydroorotase (Geobacillus kaustophilus (strain HTA426)).